The primary structure comprises 177 residues: Large ribosomal subunit protein uL6 (177 aa).

It belongs to the universal ribosomal protein uL6 family. As to quaternary structure, part of the 50S ribosomal subunit.

Functionally, this protein binds to the 23S rRNA, and is important in its secondary structure. It is located near the subunit interface in the base of the L7/L12 stalk, and near the tRNA binding site of the peptidyltransferase center. This Methylobacillus flagellatus (strain ATCC 51484 / DSM 6875 / VKM B-1610 / KT) protein is Large ribosomal subunit protein uL6.